The sequence spans 66 residues: Large ribosomal subunit protein uL29 (66 aa).

It belongs to the universal ribosomal protein uL29 family.

The polypeptide is Large ribosomal subunit protein uL29 (Francisella tularensis subsp. holarctica (strain LVS)).